The sequence spans 266 residues: Putative zinc finger protein 034R (266 aa).

The disordered stretch occupies residues Ser-84–Pro-176. Residues Ser-88 to Pro-100 show a composition bias toward basic and acidic residues. Polar residues-rich tracts occupy residues Lys-105–Leu-119 and Gly-160–Pro-176. The segment at Cys-180–Gly-192 adopts a C3H1-type zinc-finger fold.

The protein belongs to the IIV-6 077L family.

The chain is Putative zinc finger protein 034R from Aedes vexans (Inland floodwater mosquito).